A 521-amino-acid chain; its full sequence is BAR/IMD domain-containing adapter protein 2 (521 aa).

In terms of domain architecture, IMD spans 1-250; it reads MSLSRSEEMH…VQLMQQMGNS (250 aa). Positions 132-153 form a coiled coil; the sequence is DALDKCQAELKKLRKKSQGSKN. Residues serine 262, serine 324, serine 326, and serine 337 each carry the phosphoserine modification. Residues 297 to 370 form a disordered region; it reads APVMNGVSGP…TLPRSSSMAA (74 aa). Residues 321-333 show a composition bias toward low complexity; sequence QPKSTSPPQSQSK. Threonine 341 bears the Phosphothreonine mark. The residue at position 347 (serine 347) is a Phosphoserine. Residues 353–368 show a composition bias toward polar residues; that stretch reads SYATTENKTLPRSSSM. Threonine 361 carries the phosphothreonine modification. 4 positions are modified to phosphoserine: serine 367, serine 385, serine 396, and serine 455. Residues 375-438 enclose the SH3 domain; the sequence is NGRMRVKAIF…PFSYTRVLDN (64 aa). Residues 450–471 form a disordered region; that stretch reads QGKSSSTGNLLDKEDLALPPPD.

As to quaternary structure, homodimer. Interacts with CDC42 and RAC1 that have been activated by GTP binding. Interacts with ATN1, ADGRB1, DIAPH1, EPS8, SHANK1, SHANK2, SHANK3, TIAM1, WASF1 and WASF2. Interacts with ENAH after recruitment of CDC42. Phosphorylated on tyrosine residues by INSR in response to insulin treatment.

Its subcellular location is the cytoplasm. It is found in the membrane. The protein localises to the cell projection. It localises to the filopodium. The protein resides in the ruffle. Its subcellular location is the cytoskeleton. Its function is as follows. Adapter protein that links membrane-bound small G-proteins to cytoplasmic effector proteins. Necessary for CDC42-mediated reorganization of the actin cytoskeleton and for RAC1-mediated membrane ruffling. Involved in the regulation of the actin cytoskeleton by WASF family members and the Arp2/3 complex. Plays a role in neurite growth. Acts syngeristically with ENAH to promote filipodia formation. Plays a role in the reorganization of the actin cytoskeleton in response to bacterial infection. Participates in actin bundling when associated with EPS8, promoting filopodial protrusions. This chain is BAR/IMD domain-containing adapter protein 2 (BAIAP2), found in Bos taurus (Bovine).